The following is a 145-amino-acid chain: Basic phospholipase A2 S6-45 (145 aa).

The signal sequence occupies residues 1-19 (MYPAHLLVLLAVCVSLLGA). Positions 20 to 27 (SDIPPQPL) are excised as a propeptide. 7 cysteine pairs are disulfide-bonded: Cys38–Cys99, Cys54–Cys144, Cys56–Cys72, Cys71–Cys127, Cys78–Cys120, Cys88–Cys113, and Cys106–Cys118. The Ca(2+) site is built by Tyr55, Gly57, and Gly59. His75 is an active-site residue. Position 76 (Asp76) interacts with Ca(2+). The active site involves Asp121.

It belongs to the phospholipase A2 family. Group I subfamily. D49 sub-subfamily. The cofactor is Ca(2+). As to expression, expressed by the venom gland.

It is found in the secreted. The enzyme catalyses a 1,2-diacyl-sn-glycero-3-phosphocholine + H2O = a 1-acyl-sn-glycero-3-phosphocholine + a fatty acid + H(+). Snake venom phospholipase A2 (PLA2) that inhibits collagen-induced platelet aggregation. PLA2 catalyzes the calcium-dependent hydrolysis of the 2-acyl groups in 3-sn-phosphoglycerides. This chain is Basic phospholipase A2 S6-45, found in Austrelaps superbus (Lowland copperhead snake).